Here is a 132-residue protein sequence, read N- to C-terminus: Small ribosomal subunit protein uS8 (132 aa).

Belongs to the universal ribosomal protein uS8 family. Part of the 30S ribosomal subunit. Contacts proteins S5 and S12.

In terms of biological role, one of the primary rRNA binding proteins, it binds directly to 16S rRNA central domain where it helps coordinate assembly of the platform of the 30S subunit. The protein is Small ribosomal subunit protein uS8 of Acidobacterium capsulatum (strain ATCC 51196 / DSM 11244 / BCRC 80197 / JCM 7670 / NBRC 15755 / NCIMB 13165 / 161).